A 195-amino-acid polypeptide reads, in one-letter code: CASP-like protein 1B1 (195 aa).

Residues 1-25 (MDLEKGKKPSEQAAACRIMQVKDKL) lie on the Cytoplasmic side of the membrane. A helical transmembrane segment spans residues 26–46 (ITLQPVVRACVFLATAVAAVI). Over 47–78 (MGLNKQSYTTVVAIVGTRPVTQTFTAKFKDTP) the chain is Extracellular. Residues 79-99 (AFVFFVIANAIASGYNLMVLV) traverse the membrane as a helical segment. Topologically, residues 100 to 114 (TRRILQRRAQSLSVH) are cytoplasmic. A helical transmembrane segment spans residues 115-135 (LLDMVILTLLATGSATAASMA). The Extracellular portion of the chain corresponds to 136-160 (QLGKNGNLHARWNPICDKFGSFCNH). A helical transmembrane segment spans residues 161–181 (GGIALMSSFIGVALMLALNLL). Residues 182–195 (SAAANSPRSNVTGQ) lie on the Cytoplasmic side of the membrane.

It belongs to the Casparian strip membrane proteins (CASP) family. As to quaternary structure, homodimer and heterodimers.

Its subcellular location is the cell membrane. This is CASP-like protein 1B1 from Oryza sativa subsp. indica (Rice).